The sequence spans 813 residues: Ubiquitin carboxyl-terminal hydrolase 45 (813 aa).

Positions 1-14 are enriched in basic and acidic residues; the sequence is MRVKDPSKDLPEKG. The interval 1–27 is disordered; that stretch reads MRVKDPSKDLPEKGKRNKRPLLPHDED. The interval 1–62 is interaction with ERCC1; sequence MRVKDPSKDL…AVAESLWSVC (62 aa). A phosphoserine mark is found at S28 and S29. Residues 36 to 153 form a UBP-type zinc finger; it reads LTCQHVSYAV…AQIVDFLQKH (118 aa). C38, H40, C62, C65, C85, C88, C93, H101, H105, H114, C127, and C130 together coordinate Zn(2+). The USP domain maps to 191-812; it reads KGITNLGNTC…QAYLLFYERI (622 aa). C200 serves as the catalytic Nucleophile. Composition is skewed to basic and acidic residues over residues 405 to 414 and 450 to 466; these read LQETDQDHNK and WPSE…KNDN. Positions 405–552 are disordered; the sequence is LQETDQDHNK…QAKETHGGEE (148 aa). The span at 472 to 488 shows a compositional bias: polar residues; it reads PASTLSTEASLNESLTD. 2 positions are modified to phosphoserine: S507 and S525. Positions 521 to 533 are enriched in basic and acidic residues; that stretch reads SRGDSCGHAEQHP. The active-site Proton acceptor is H745.

This sequence belongs to the peptidase C19 family. In terms of assembly, interacts with ERCC1. The catalytically active form interacts with SPDL1. Retina.

The protein resides in the photoreceptor inner segment. It is found in the cytoplasm. Its subcellular location is the nucleus. It carries out the reaction Thiol-dependent hydrolysis of ester, thioester, amide, peptide and isopeptide bonds formed by the C-terminal Gly of ubiquitin (a 76-residue protein attached to proteins as an intracellular targeting signal).. Its function is as follows. Catalyzes the deubiquitination of SPDL1. Plays a role in the repair of UV-induced DNA damage via deubiquitination of ERCC1, promoting its recruitment to DNA damage sites. May be involved in the maintenance of photoreceptor function. May play a role in normal retinal development. Plays a role in cell migration. This Mus musculus (Mouse) protein is Ubiquitin carboxyl-terminal hydrolase 45 (Usp45).